Consider the following 92-residue polypeptide: Elongation factor 1-beta (92 aa).

The protein belongs to the EF-1-beta/EF-1-delta family.

Promotes the exchange of GDP for GTP in EF-1-alpha/GDP, thus allowing the regeneration of EF-1-alpha/GTP that could then be used to form the ternary complex EF-1-alpha/GTP/AAtRNA. The protein is Elongation factor 1-beta of Pyrobaculum arsenaticum (strain DSM 13514 / JCM 11321 / PZ6).